Consider the following 478-residue polypeptide: Glycogen synthase (478 aa).

Position 15 (Lys15) interacts with ADP-alpha-D-glucose.

This sequence belongs to the glycosyltransferase 1 family. Bacterial/plant glycogen synthase subfamily.

The enzyme catalyses [(1-&gt;4)-alpha-D-glucosyl](n) + ADP-alpha-D-glucose = [(1-&gt;4)-alpha-D-glucosyl](n+1) + ADP + H(+). It functions in the pathway glycan biosynthesis; glycogen biosynthesis. Functionally, synthesizes alpha-1,4-glucan chains using ADP-glucose. This chain is Glycogen synthase, found in Acholeplasma laidlawii (strain PG-8A).